We begin with the raw amino-acid sequence, 237 residues long: Transcriptional regulatory protein YvrH (237 aa).

In terms of domain architecture, Response regulatory spans 5-119 (SILIVDDEKA…ELAARIRAHL (115 aa)). A 4-aspartylphosphate modification is found at D55. Positions 131–230 (NQTYTYDYFT…VRGLGYRFIP (100 aa)) form a DNA-binding region, ompR/PhoB-type.

In terms of processing, phosphorylated by YvrG.

It is found in the cytoplasm. In terms of biological role, member of the two-component regulatory system YvrG/YvrH that positively regulates 7 transcriptional units (wprA, wapA-yxxG, dltABCDE, sunA, sunT-bdbA-yolJ-bdbB, sigO-rsoA, and sigX-rsiX), and negatively regulates the lytABC operon. The polypeptide is Transcriptional regulatory protein YvrH (yvrH) (Bacillus subtilis (strain 168)).